The chain runs to 312 residues: Plasminogen activator (312 aa).

The N-terminal stretch at 1–20 (MKKSSIVATIITILSGSANA) is a signal peptide. Residues 21-31 (ASSQLIPNISP) are Periplasmic-facing. The beta stranded transmembrane segment at 32-40 (DSFTVAAST) threads the bilayer. Residues 41–70 (GMLSGKSHEMLYDAETGRKISQLDWKIKNV) are Extracellular-facing. The chain crosses the membrane as a beta stranded span at residues 71 to 80 (AILKGDISWD). Topologically, residues 81–84 (PYSF) are periplasmic. Residues 85-94 (LTLNARGWTS) form a beta stranded membrane-spanning segment. Residues 95-131 (LASGSGNMDDYDWMNENQSEWTDHSSHPATNVNHANE) lie on the Extracellular side of the membrane. Catalysis depends on residues aspartate 104 and aspartate 106. Residues 132 to 140 (YDLNVKGWL) traverse the membrane as a beta stranded segment. Over 141 to 145 (LQDEN) the chain is Periplasmic. A beta stranded membrane pass occupies residues 146–154 (YKAGITAGY). Over 155 to 194 (QETRFSWTATGGSYSYNNGAYTGNFPKGVRVIGYNQRFSM) the chain is Extracellular. The chain crosses the membrane as a beta stranded span at residues 195-204 (PYIGLAGQYR). The Periplasmic portion of the chain corresponds to 205–207 (IND). Residues 208–216 (FELNALFKF) form a beta stranded membrane-spanning segment. Over 217-244 (SDWVRAHDNDEHYMRDLTFREKTSGSRY) the chain is Extracellular. Active-site residues include aspartate 226 and histidine 228. The beta stranded transmembrane segment at 245-255 (YGTVINAGYYV) threads the bilayer. Topologically, residues 256–258 (TPN) are periplasmic. A beta stranded transmembrane segment spans residues 259–267 (AKVFAEFTY). Over 268–301 (SKYDEGKGGTQTIDKNSGDSVSIGGDAAGISNKN) the chain is Extracellular. A beta stranded transmembrane segment spans residues 302–312 (YTVTAGLQYRF).

Belongs to the peptidase A26 family.

It is found in the cell outer membrane. It carries out the reaction Converts human Glu-plasminogen to plasmin by cleaving the 560-Arg-|-Val-561 peptide bond that is also hydrolyzed by the mammalian u-plasminogen activator and t-plasminogen activator. Also cleaves arginyl bonds in other proteins.. With respect to regulation, requires bacterial lipopolysaccharide (LPS) for activation; addition of LPS to inactive protein reactivates it. In the absence of LPS the active site groove is slightly narrower, and peptide substrate binds deep within the active site groove, displacing the nucleophilic water molecule. Functionally, in the mammalian host activates (cleaves) plasminogen to generate the serine protease plasmin. Plasmin degrades fibrin clots (fibrinolysis) and facilitates bacterial cell migration, enabling rapid dissemination of bacteria from the initial site of infection. Cleaves host plasminogen to generate plasmin and probably also has autocatalytic activity. Fibrinolytic activity prevails at 37 degrees Celsius whereas coagulase expression predominates at lower temperatures (28 degrees Celsius). Cleaves plasminogen; plasminogen cleavage is much higher than coagulase activity. The sequence is that of Plasminogen activator from Yersinia pestis.